Consider the following 543-residue polypeptide: Chaperonin GroEL (543 aa).

ATP is bound by residues 29 to 32 (TLGP), Lys-50, 86 to 90 (DGTTT), Gly-413, 480 to 482 (NAA), and Asp-496. Residues 524-543 (EKPEKKESTPASAGAGDMDF) form a disordered region.

It belongs to the chaperonin (HSP60) family. As to quaternary structure, forms a cylinder of 14 subunits composed of two heptameric rings stacked back-to-back. Interacts with the co-chaperonin GroES.

The protein resides in the cytoplasm. The catalysed reaction is ATP + H2O + a folded polypeptide = ADP + phosphate + an unfolded polypeptide.. In terms of biological role, together with its co-chaperonin GroES, plays an essential role in assisting protein folding. The GroEL-GroES system forms a nano-cage that allows encapsulation of the non-native substrate proteins and provides a physical environment optimized to promote and accelerate protein folding. This is Chaperonin GroEL from Thermus thermophilus (strain ATCC BAA-163 / DSM 7039 / HB27).